The primary structure comprises 393 residues: NAD(P)H-quinone oxidoreductase subunit H, chloroplastic (393 aa).

This sequence belongs to the complex I 49 kDa subunit family. As to quaternary structure, NDH is composed of at least 16 different subunits, 5 of which are encoded in the nucleus.

Its subcellular location is the plastid. It localises to the chloroplast thylakoid membrane. The enzyme catalyses a plastoquinone + NADH + (n+1) H(+)(in) = a plastoquinol + NAD(+) + n H(+)(out). It carries out the reaction a plastoquinone + NADPH + (n+1) H(+)(in) = a plastoquinol + NADP(+) + n H(+)(out). In terms of biological role, NDH shuttles electrons from NAD(P)H:plastoquinone, via FMN and iron-sulfur (Fe-S) centers, to quinones in the photosynthetic chain and possibly in a chloroplast respiratory chain. The immediate electron acceptor for the enzyme in this species is believed to be plastoquinone. Couples the redox reaction to proton translocation, and thus conserves the redox energy in a proton gradient. The polypeptide is NAD(P)H-quinone oxidoreductase subunit H, chloroplastic (Spinacia oleracea (Spinach)).